We begin with the raw amino-acid sequence, 506 residues long: MGDRSEGPGPTRPGPPGIGPEGPLGQLLRRHRSPSPTRGGQEPRRVRRRVLVQQEEEVVSGSPSGPRGDRSEGPGPTRPGPPGIGPEGPLGQLLRRHRSPSPTRGGQEPRRVRRRVLVQQEEEVVSGSPSGPRGDRSEGPGPTRPGPPGIGPEGPLGQLLRRHRSPSPTRGGQEPRRVRRRVLVQQEEEVVSGSPSGPRGDRSEGPGPTRPGPPGIGPEGPLGQLLRRHRSPSPTRGGQEPRRVRRRVLVQQEEEVVSGSPSGPRGDRSEGPGPTRPGPPGIGPEGPLGQLLRRHRSPSPTRGGQEPRRVRRRVLVQQEEEVVSGSPSGPRGDRSEGPGPTRPGPPGIGPEGPLGQLLRRHRSPSPTRGGQEPRRVRRRVLVQQEEEVVSGSPSGPRGDRSEGPGPTRPGPPGIGPEGPLGQLLRRHRSPSPTRGGQEPRRVRRRVLVQQEEEVVSGSPSGPLRPRPRPPARSLREWLLRIRDHFEPPTVTTQRQSVYIEEEEDED.

Disordered stretches follow at residues 1 to 470 and 485 to 506; these read MGDR…PRPP and FEPP…EDED. Position 35 is a phosphoserine; by host (serine 35).

The protein belongs to the lymphocryptovirus EBNA-LP family. In terms of assembly, homooligomer. Interacts with host SP100; this interaction is important for EBNA-LP coactivator activity. Interacts with host HAX1, ERR1 and HSPA2. Interacts with host PRKDC and AKAP8L; these interactions modulate the coactivator function of EBNA-LP. Post-translationally, phosphorylated by the cellular protein kinase cdc2.

The protein localises to the host nucleus. Functionally, plays an important role in the establishment of B-cell immortalization by acting as an EBNA2 coactivator. This transcriptional activation preferentially enhances the expression of the major viral protein LMP1. The interaction between EBNA-LP and host SP100 correlates with coactivation of EBNA2 and the relocalization of SP100 from PML nuclear bodies into nucleoplasm. The polypeptide is Epstein-Barr nuclear antigen leader protein (EBNA-LP) (Epstein-Barr virus (strain B95-8) (HHV-4)).